The sequence spans 121 residues: Large ribosomal subunit protein uL22 (121 aa).

Belongs to the universal ribosomal protein uL22 family. Part of the 50S ribosomal subunit.

This protein binds specifically to 23S rRNA; its binding is stimulated by other ribosomal proteins, e.g. L4, L17, and L20. It is important during the early stages of 50S assembly. It makes multiple contacts with different domains of the 23S rRNA in the assembled 50S subunit and ribosome. Its function is as follows. The globular domain of the protein is located near the polypeptide exit tunnel on the outside of the subunit, while an extended beta-hairpin is found that lines the wall of the exit tunnel in the center of the 70S ribosome. The polypeptide is Large ribosomal subunit protein uL22 (Parasynechococcus marenigrum (strain WH8102)).